The primary structure comprises 129 residues: MAKQPTRARKRVRKQVADGVAHIHASFNNTIVTITDRQGNALAWATAGGSGFRGSRKSTPFAAQVAAERCAEMAKEYGLKNLEVMVKGPGPGRESTVRALNAAGFRITNIVDATPIPHNGCRPPKKRRV.

Belongs to the universal ribosomal protein uS11 family. As to quaternary structure, part of the 30S ribosomal subunit. Interacts with proteins S7 and S18. Binds to IF-3.

In terms of biological role, located on the platform of the 30S subunit, it bridges several disparate RNA helices of the 16S rRNA. Forms part of the Shine-Dalgarno cleft in the 70S ribosome. The protein is Small ribosomal subunit protein uS11 of Vibrio campbellii (strain ATCC BAA-1116).